The sequence spans 365 residues: uncharacterized protein (365 aa).

29–36 serves as a coordination point for ATP; the sequence is GPLNSGKS.

This sequence belongs to the archaeal ATPase family.

This is an uncharacterized protein from Methanocaldococcus jannaschii (strain ATCC 43067 / DSM 2661 / JAL-1 / JCM 10045 / NBRC 100440) (Methanococcus jannaschii).